The following is a 1168-amino-acid chain: MASSSSSRNWVYDVFLSFSGKDVRVTFRSHFLKELDRKLISAFRDNEIERSHSLWPDLEQAIKDSRIAVVVFSKNYASSSWCLNELLEIVNCNDKIIIPVFYGVDPSQVRYQIGEFGSIFEKTCKRQTEEVKNQWKKALTDVANMLGFDSAKWDDEAKMIEEIANDVLAKLLLTSSTDSAENSIGIEDHIANMSVLLKLEAEEVRMVGIWGSSGIGKTTIARALFNQLSRHFPVSKFIDRAFVYKSRETYKGANPDDPNMKLHLQGCFLSEILGKKDIKIDHLGALGERLKHQKTLIIIDDLDDLVVLDSLVGKTNWFGCGSRIIVITNNKQFLRAHGIDHIYEVSLPSKERAQEMFCQSAFGENSPPEGFEELVVEIAWLAGSLPLGLTVFGSALRGRKKEYWVKMLPRLQNDLDGNIEETLKVSYDAIGNVKDQALFRLIACLFNHVKVRDIELLLADSGLDVNIALENLVDKSLIHVRNDHVEMHRLLQETGRNIVRSQSTDNPGEREFLVDSNDSRTVLSEGIGTRKVLGISLDTSKVSEFCVHENAFKGMGNLLFLDISSKTFIEEEVKVHLPEKINYYSVQPKQLIWDRFPLKCMPYTFLRNLVKLEMHDSKLEKLWEGAMSFTCLKELDMWASKYLKEIPDLSKATNIEKLDFGHCWSLVELPSSIRNLNKLLELNMEYCGELETLPTGFNLKSLDYLNFNECWKLRTFPEFATNISNLILAETSIEEYPSNLYFKNVRELSMGKADSDENKCQGVKPFMPMLSPTLTLLELWNIPNLVELSSSFQNLNNLERLDICYCRNLESLPTGINLESLVSLNLFGCSRLKRFPDISTNIKYLDLDQTGIEEVPWQIENFFNLTKLTMKGCRELKCVSLNIFKLKHLGEVSFSNCGALTRVDLSCYPSGVEMMKADNADIVSEETTSSLPDSCVLNVNFMDCVNLDREPVLHQQSIIFNSMILPGEEVPSYFTYRTSDSQPFGTSSSLPIPLLPTQLSQPFFRFRVCAVVSASNGVYIGVYSRFKGRIGNKFDSFGEVHNFMEIEKGIHLCIFDCRIRLYKDNVPLSQLNYDHVDINIHITSGDWRSTVVLKEWGIRLLETGSSAENRLGNPNSTLPHVSQAEEGNMGYYTHVQGLVNEIENSEDSGDNNVETERSKKRMRLHHFI.

One can recognise a TIR domain in the interval 10 to 171 (WVYDVFLSFS…EIANDVLAKL (162 aa)). Residue E85 is part of the active site. The 266-residue stretch at 187 to 452 (EDHIANMSVL…ACLFNHVKVR (266 aa)) folds into the NB-ARC domain. 10 LRR repeats span residues 539-562 (TSKV…LFLD), 606-629 (LRNL…AMSF), 631-653 (CLKE…SKAT), 676-699 (LNKL…GFNL), 701-720 (SLDY…PEFA), 721-744 (TNIS…YFKN), 795-820 (LNNL…NLES), 839-865 (STNI…FFNL), 873-896 (CREL…SFSN), and 1065-1089 (NVPL…DWRS).

It belongs to the disease resistance NB-LRR family. In terms of assembly, part of a nuclear protein complex made of VICTR, PAD4 and EDS1. Interacts (via TIR domain) with PAD4 and EDS1.

It localises to the cytoplasm. The protein localises to the nucleus. The catalysed reaction is NAD(+) + H2O = ADP-D-ribose + nicotinamide + H(+). Disease resistance protein of the TIR-NB-LRR-type. Part of the RPS6 locus that contains a cluster of several paralogous disease resistance (R) genes. Resistance proteins guard the plant against pathogens that contain an appropriate avirulence protein via an indirect interaction with this avirulence protein. That triggers a defense system including the hypersensitive response, which restricts the pathogen growth. Required for [5-(3,4-dichlorophenyl)furan-2-yl]-piperidine-1-ylmethanethione-(DFPM-) induced root growth arrest due to reduced number of meristem cells in the division zone of the primary root and inhibition of abscisic acid- (ABA-) induced stomatal closing. This is Protein VARIATION IN COMPOUND TRIGGERED ROOT growth response (VICTR) from Arabidopsis thaliana (Mouse-ear cress).